A 277-amino-acid chain; its full sequence is Ribosomal RNA small subunit methyltransferase A (277 aa).

S-adenosyl-L-methionine is bound by residues N24, L26, G51, E72, D96, and N123.

Belongs to the class I-like SAM-binding methyltransferase superfamily. rRNA adenine N(6)-methyltransferase family. RsmA subfamily.

The protein resides in the cytoplasm. It carries out the reaction adenosine(1518)/adenosine(1519) in 16S rRNA + 4 S-adenosyl-L-methionine = N(6)-dimethyladenosine(1518)/N(6)-dimethyladenosine(1519) in 16S rRNA + 4 S-adenosyl-L-homocysteine + 4 H(+). In terms of biological role, specifically dimethylates two adjacent adenosines (A1518 and A1519) in the loop of a conserved hairpin near the 3'-end of 16S rRNA in the 30S particle. May play a critical role in biogenesis of 30S subunits. This Ureaplasma parvum serovar 3 (strain ATCC 27815 / 27 / NCTC 11736) protein is Ribosomal RNA small subunit methyltransferase A.